Consider the following 243-residue polypeptide: 2,3-bisphosphoglycerate-dependent phosphoglycerate mutase (243 aa).

Residues 8 to 15 (RHGQSEWN), 21 to 22 (TG), Arg-60, 87 to 90 (ERHY), Lys-98, 114 to 115 (RR), and 183 to 184 (GN) each bind substrate. The active-site Tele-phosphohistidine intermediate is the His-9. The active-site Proton donor/acceptor is the Glu-87.

The protein belongs to the phosphoglycerate mutase family. BPG-dependent PGAM subfamily.

It catalyses the reaction (2R)-2-phosphoglycerate = (2R)-3-phosphoglycerate. The protein operates within carbohydrate degradation; glycolysis; pyruvate from D-glyceraldehyde 3-phosphate: step 3/5. Functionally, catalyzes the interconversion of 2-phosphoglycerate and 3-phosphoglycerate. In Clostridium acetobutylicum (strain ATCC 824 / DSM 792 / JCM 1419 / IAM 19013 / LMG 5710 / NBRC 13948 / NRRL B-527 / VKM B-1787 / 2291 / W), this protein is 2,3-bisphosphoglycerate-dependent phosphoglycerate mutase.